Consider the following 62-residue polypeptide: Phylloseptin-Az7 (62 aa).

The first 19 residues, 1–19 (LKKSLFLVLFLGLVSLSIC), serve as a signal peptide directing secretion. Residues 20–40 (EEEKRETEEKENEQEDDKSEE) constitute a propeptide that is removed on maturation. A Phenylalanine amide modification is found at Phe61.

Belongs to the frog skin active peptide (FSAP) family. Phylloseptin subfamily. In terms of tissue distribution, expressed by the skin glands.

The protein resides in the secreted. Has antimicrobial activity. This is Phylloseptin-Az7 (psn15) from Pithecopus azureus (Orange-legged monkey tree frog).